The sequence spans 392 residues: Proteasomal ATPase-associated factor 1 (392 aa).

The residue at position 2 (A2) is an N-acetylalanine. WD repeat units follow at residues 82-121 (APYT…IWQA), 125-163 (ELRR…IWSA), 167-205 (SCVV…LWDC), 209-259 (ACLG…LARE), 270-308 (SRQL…QLDV), 313-349 (APVQ…IVQQ), and 353-389 (YVTE…RYQL).

The protein belongs to the WD repeat PAAF1/RPN14 family. As to quaternary structure, interacts with PSMC1, PSMC2, PSMC3, PSMC4, PSMC5 and PSMC6. Interacts with SUPT6H. (Microbial infection) Interacts with HIV-1 Tat. As to expression, ubiquitously expressed, with highest levels in kidney, brain and testis.

Inhibits proteasome 26S assembly and proteolytic activity by impairing the association of the 19S regulatory complex with the 20S core. In case of HIV-1 infection, recruited by viral Tat to the HIV-1 promoter, where it promotes the recruitment of 19S regulatory complex through dissociation of the proteasome 26S. This presumably promotes provirus transcription efficiency. Protects SUPT6H from proteasomal degradation. This is Proteasomal ATPase-associated factor 1 (PAAF1) from Homo sapiens (Human).